Consider the following 113-residue polypeptide: Large ribosomal subunit protein uL24 (113 aa).

A disordered region spans residues 48–70; the sequence is HRKRVTNDKGTSSGGLEKRESPM.

This sequence belongs to the universal ribosomal protein uL24 family. As to quaternary structure, part of the 50S ribosomal subunit.

Its function is as follows. One of two assembly initiator proteins, it binds directly to the 5'-end of the 23S rRNA, where it nucleates assembly of the 50S subunit. Functionally, one of the proteins that surrounds the polypeptide exit tunnel on the outside of the subunit. This chain is Large ribosomal subunit protein uL24, found in Tropheryma whipplei (strain TW08/27) (Whipple's bacillus).